Reading from the N-terminus, the 241-residue chain is MSSSKETAKSLIQTKSRSSIRNMFDEVAPTYDFLNHLLSLGIDNYWRVVAAKKARKQVEGEREPKILDVATGTGDLAASMAKIPGAKVTGYDLSPEMLAIARKKYPNIEFHEGFAEKMPFADQSFHVVSAGFGVRNFEDLAQGMKEFHRVLKPGGCAYIIEPMIPRNPVMKKLYLIYFKNVLPKIAGMFSKSTFAYDYLPNSVEQFPQAEAFTKILKQAGFKKAEFFPMTFETSILYVATK.

The S-adenosyl-L-methionine site is built by T73 and D92.

The protein belongs to the class I-like SAM-binding methyltransferase superfamily. MenG/UbiE family.

It carries out the reaction a 2-demethylmenaquinol + S-adenosyl-L-methionine = a menaquinol + S-adenosyl-L-homocysteine + H(+). It functions in the pathway quinol/quinone metabolism; menaquinone biosynthesis; menaquinol from 1,4-dihydroxy-2-naphthoate: step 2/2. Functionally, methyltransferase required for the conversion of demethylmenaquinol (DMKH2) to menaquinol (MKH2). The chain is Demethylmenaquinone methyltransferase from Chlorobaculum parvum (strain DSM 263 / NCIMB 8327) (Chlorobium vibrioforme subsp. thiosulfatophilum).